The following is a 218-amino-acid chain: Ribosome maturation factor RimM (218 aa).

The PRC barrel domain occupies 141–214 (GELWWDRDLV…HIVVDPPPGL (74 aa)).

The protein belongs to the RimM family. Binds ribosomal protein uS19.

It localises to the cytoplasm. Functionally, an accessory protein needed during the final step in the assembly of 30S ribosomal subunit, possibly for assembly of the head region. Essential for efficient processing of 16S rRNA. May be needed both before and after RbfA during the maturation of 16S rRNA. It has affinity for free ribosomal 30S subunits but not for 70S ribosomes. The protein is Ribosome maturation factor RimM of Parafrankia sp. (strain EAN1pec).